Reading from the N-terminus, the 222-residue chain is Ribulose-phosphate 3-epimerase (222 aa).

Substrate is bound at residue Ser-7. 3 residues coordinate a divalent metal cation: His-32, Asp-34, and His-65. The active-site Proton acceptor is Asp-34. Substrate is bound by residues His-65, 141 to 144 (GFSG), 174 to 176 (DGG), and 196 to 197 (GS). Position 174 (Asp-174) interacts with a divalent metal cation. The active-site Proton donor is the Asp-174.

Belongs to the ribulose-phosphate 3-epimerase family. The cofactor is a divalent metal cation.

It carries out the reaction D-ribulose 5-phosphate = D-xylulose 5-phosphate. The protein operates within carbohydrate degradation. Its function is as follows. Catalyzes the reversible epimerization of D-ribulose 5-phosphate to D-xylulose 5-phosphate. The protein is Ribulose-phosphate 3-epimerase of Aquifex aeolicus (strain VF5).